Reading from the N-terminus, the 205-residue chain is N-(5'-phosphoribosyl)anthranilate isomerase (205 aa).

This sequence belongs to the TrpF family.

It carries out the reaction N-(5-phospho-beta-D-ribosyl)anthranilate = 1-(2-carboxyphenylamino)-1-deoxy-D-ribulose 5-phosphate. It functions in the pathway amino-acid biosynthesis; L-tryptophan biosynthesis; L-tryptophan from chorismate: step 3/5. In Zygosaccharomyces bailii, this protein is N-(5'-phosphoribosyl)anthranilate isomerase (TRP1).